Here is a 622-residue protein sequence, read N- to C-terminus: DNA topoisomerase 3 (622 aa).

The Toprim domain maps to 2-148 (RVLCVAEKNS…SIQVIRADFN (147 aa)). The Topo IA-type catalytic domain maps to 166–596 (SKNAADAVDA…MILTQFRDVF (431 aa)). Tyrosine 330 functions as the O-(5'-phospho-DNA)-tyrosine intermediate in the catalytic mechanism.

Belongs to the type IA topoisomerase family. Interacts with hus2.

The enzyme catalyses ATP-independent breakage of single-stranded DNA, followed by passage and rejoining.. Releases the supercoiling and torsional tension of DNA introduced during the DNA replication and transcription by transiently cleaving and rejoining one strand of the DNA duplex. Introduces a single-strand break via transesterification at a target site in duplex DNA. The scissile phosphodiester is attacked by the catalytic tyrosine of the enzyme, resulting in the formation of a DNA-(5'-phosphotyrosyl)-enzyme intermediate and the expulsion of a 3'-OH DNA strand. The free DNA strand than undergoes passage around the unbroken strand thus removing DNA supercoils. Finally, in the religation step, the DNA 3'-OH attacks the covalent intermediate to expel the active-site tyrosine and restore the DNA phosphodiester backbone. This chain is DNA topoisomerase 3 (top3), found in Schizosaccharomyces pombe (strain 972 / ATCC 24843) (Fission yeast).